The following is a 1065-amino-acid chain: Probable importin-7 homolog (1065 aa).

The region spanning 25-98 is the Importin N-terminal domain; the sequence is AEAQLQQIKV…KENLIDLLVH (74 aa). The segment at 958–996 is disordered; that stretch reads ENGGDLGEDEGDNFDDQNDDDDQDSEEDLFEDEDTPDFE. The segment covering 963-996 has biased composition (acidic residues); sequence LGEDEGDNFDDQNDDDDQDSEEDLFEDEDTPDFE.

The protein belongs to the importin beta family.

The protein localises to the cytoplasm. It localises to the nucleus. In terms of biological role, may function in nuclear protein import. In Dictyostelium discoideum (Social amoeba), this protein is Probable importin-7 homolog.